We begin with the raw amino-acid sequence, 605 residues long: Elongation factor 4 (605 aa).

The tr-type G domain maps to 9–192; it reads SRTRNFCIIA…AIIARIPSPK (184 aa). GTP is bound by residues 21–26 and 139–142; these read DHGKST and NKID.

The protein belongs to the TRAFAC class translation factor GTPase superfamily. Classic translation factor GTPase family. LepA subfamily.

The protein localises to the cell inner membrane. It catalyses the reaction GTP + H2O = GDP + phosphate + H(+). Required for accurate and efficient protein synthesis under certain stress conditions. May act as a fidelity factor of the translation reaction, by catalyzing a one-codon backward translocation of tRNAs on improperly translocated ribosomes. Back-translocation proceeds from a post-translocation (POST) complex to a pre-translocation (PRE) complex, thus giving elongation factor G a second chance to translocate the tRNAs correctly. Binds to ribosomes in a GTP-dependent manner. In Chlorobium limicola (strain DSM 245 / NBRC 103803 / 6330), this protein is Elongation factor 4.